A 371-amino-acid polypeptide reads, in one-letter code: Protein SOMBRERO (371 aa).

Residues 17 to 166 (VPPGFRFHPT…GWVVCRVFKK (150 aa)) form the NAC domain. Residues 118–172 (IGLRKTLVFYTGRAPHGQKTEWIMHEYRLDDSENEIQEDGWVVCRVFKKKNHFRG) mediate DNA binding. Disordered regions lie at residues 176-213 (EQEQ…LILH) and 316-355 (VQNH…NQRF). Basic and acidic residues predominate over residues 192 to 201 (NDHDHHHHID). 2 stretches are compositionally biased toward low complexity: residues 202-213 (SNSNNHSPLILH) and 340-349 (GNNNGGSSSS).

As to expression, accumulates in maturing root cap cells, in both COL and LRC cells.

It localises to the nucleus. Transcription regulator. Together with BRN1 and BRN2, regulates cellular maturation of root cap. Represses stem cell-like divisions in the root cap daughter cells, and thus promotes daughter cell fate. Inhibits expression of its positive regulator FEZ in a feedback loop for controlled switches in cell division plane. Promotes the expression of genes involved in secondary cell walls (SCW) biosynthesis. This is Protein SOMBRERO (SMB) from Arabidopsis thaliana (Mouse-ear cress).